Consider the following 211-residue polypeptide: External core antigen (211 aa).

Positions 1 to 19 are cleaved as a signal peptide; it reads MHLFHLCLIILCSCPTVQA. The tract at residues 25-27 is HBEAG; that stretch reads GWL. Residues 165–211 are disordered; the sequence is NAPILSTLPETTVVRRRRPSGRRTPSPRRRRSQSPRRRRSQSPASSC. Positions 178–204 are enriched in basic residues; sequence VRRRRPSGRRTPSPRRRRSQSPRRRRS. The 1; half-length repeat unit spans residues 183 to 189; sequence PSGRRTP. The tract at residues 183–205 is 3 X 8 AA repeats of S-P-R-R-R-R-S-Q; the sequence is PSGRRTPSPRRRRSQSPRRRRSQ. Positions 183-211 are excised as a propeptide; it reads PSGRRTPSPRRRRSQSPRRRRSQSPASSC. Tandem repeats lie at residues 190–197 and 198–205.

The protein belongs to the orthohepadnavirus precore antigen family. In terms of assembly, homodimerizes. Phosphorylated. Post-translationally, cleaved by host furin.

Its subcellular location is the secreted. It is found in the host nucleus. Its function is as follows. May regulate immune response to the intracellular capsid in acting as a T-cell tolerogen, by having an immunoregulatory effect which prevents destruction of infected cells by cytotoxic T-cells. This immune regulation may predispose to chronicity during perinatal infections and prevent severe liver injury during adult infections. The polypeptide is External core antigen (Woolly monkey hepatitis B virus (isolate Louisville) (WMHBV)).